We begin with the raw amino-acid sequence, 145 residues long: Immune protein Tsi4 (145 aa).

Transmembrane regions (helical) follow at residues 9 to 29 (IGGL…LLAG) and 109 to 129 (ALWG…IVGF).

The protein resides in the membrane. Its function is as follows. Immunity protein that plays a role in preventing early activation of toxin Tse4. The protein is Immune protein Tsi4 of Pseudomonas aeruginosa (strain ATCC 15692 / DSM 22644 / CIP 104116 / JCM 14847 / LMG 12228 / 1C / PRS 101 / PAO1).